The sequence spans 38 residues: Toxin Lqh 8/6 (38 aa).

Cystine bridges form between Cys2/Cys19, Cys5/Cys28, Cys16/Cys33, and Cys20/Cys35.

Expressed by the venom gland.

Its subcellular location is the secreted. Its function is as follows. Toxin with unknown function in healthy organisms. On glioma cells, interacts with chloride channels (probably ClC-3/CLCN3) and MMP2 at the surface of glioma cells. This complex is then internalized via caveolae, thus inhibiting the chloride channels necessary for cell shrinkage and tumor propagation. In Leiurus hebraeus (Hebrew deathstalker scorpion), this protein is Toxin Lqh 8/6.